The sequence spans 493 residues: Glutamyl-tRNA(Gln) amidotransferase subunit A (493 aa).

Residues Lys-78 and Ser-158 each act as charge relay system in the active site. Residue Ser-182 is the Acyl-ester intermediate of the active site.

It belongs to the amidase family. GatA subfamily. As to quaternary structure, heterotrimer of A, B and C subunits.

The enzyme catalyses L-glutamyl-tRNA(Gln) + L-glutamine + ATP + H2O = L-glutaminyl-tRNA(Gln) + L-glutamate + ADP + phosphate + H(+). Allows the formation of correctly charged Gln-tRNA(Gln) through the transamidation of misacylated Glu-tRNA(Gln) in organisms which lack glutaminyl-tRNA synthetase. The reaction takes place in the presence of glutamine and ATP through an activated gamma-phospho-Glu-tRNA(Gln). This chain is Glutamyl-tRNA(Gln) amidotransferase subunit A, found in Rickettsia felis (strain ATCC VR-1525 / URRWXCal2) (Rickettsia azadi).